Consider the following 344-residue polypeptide: Methionine import ATP-binding protein MetN (344 aa).

Residues 2–241 (IEINRVNKIF…PKTALAQEFI (240 aa)) form the ABC transporter domain. ATP is bound at residue 38–45 (GSSGAGKS).

The protein belongs to the ABC transporter superfamily. Methionine importer (TC 3.A.1.24) family. The complex is composed of two ATP-binding proteins (MetN), two transmembrane proteins (MetI) and a solute-binding protein (MetQ).

The protein localises to the cell inner membrane. It carries out the reaction L-methionine(out) + ATP + H2O = L-methionine(in) + ADP + phosphate + H(+). It catalyses the reaction D-methionine(out) + ATP + H2O = D-methionine(in) + ADP + phosphate + H(+). Functionally, part of the ABC transporter complex MetNIQ involved in methionine import. Responsible for energy coupling to the transport system. This Aliivibrio fischeri (strain ATCC 700601 / ES114) (Vibrio fischeri) protein is Methionine import ATP-binding protein MetN.